We begin with the raw amino-acid sequence, 146 residues long: UPF0178 protein BT9727_2823 (146 aa).

Belongs to the UPF0178 family.

This is UPF0178 protein BT9727_2823 from Bacillus thuringiensis subsp. konkukian (strain 97-27).